The primary structure comprises 433 residues: Cell division protein FtsZ homolog 1, chloroplastic (433 aa).

The transit peptide at 1-66 directs the protein to the chloroplast; it reads MAIIPLAQLN…TRSKSMRLRC (66 aa). Ser67 bears the N-acetylserine mark. Residues 83-87, 170-172, Glu201, Arg205, and Asp249 each bind GTP; these read GGGNN and GTG. A disordered region spans residues 399-433; sequence GSSGQQENKGMSLPHQKQSPSTISTKSSSPRRLFF. Residues 414-433 are compositionally biased toward low complexity; the sequence is QKQSPSTISTKSSSPRRLFF.

The protein belongs to the FtsZ family. As to quaternary structure, aggregates to form a contractile ring-like structure; contraction of the ring was accompanied by an increase in the filament turnover rate. This aggregation is regulated in midchloroplast stroma by MIND1 (repressor) and MINE1 (promoter). Self-interacts and binds to FTSZ2-1 in heteromers to form two morphologically distinct types of filaments, termed type-I (smooth filaments) and type-II (rough filaments), in a GTP-dependent manner. Interacts with ARC3. Part of a complex made of ARC3, ARC6, FTSZ1 and FTSZ2. In pollen grain, restricted to plastids of vegetative cells. Also present in pollen tubes plastids.

The protein resides in the plastid. Its subcellular location is the chloroplast stroma. It is found in the chloroplast thylakoid membrane. Exhibits GTPase activity. Component of the plastid division machinery that forms a contractile ring at the division site. Required for plastid division in a dose-dependent manner. Involved in epidermal plastids division in a MINE1-dependent manner. Involved in blue light-induced chloroplast movements. May regulate thylakoid development. In the vegetative shoot apex, at the shoot apical meristem (SAM), where the proplastid-to-chloroplast transition takes place, contributes equally with FTSZ2-1 in the L2 layer to plastid division. The chain is Cell division protein FtsZ homolog 1, chloroplastic from Arabidopsis thaliana (Mouse-ear cress).